Here is a 410-residue protein sequence, read N- to C-terminus: Inositol hexakisphosphate kinase 3 (410 aa).

Substrate is bound at residue 211-219 (PCVLDLKMG). Positions 333 to 358 (QEPPERAPGSPHPHEAPQAAHGSSPG) are disordered.

Belongs to the inositol phosphokinase (IPK) family. As to expression, detected in brain.

It is found in the cytoplasm. It carries out the reaction 1D-myo-inositol hexakisphosphate + ATP = 5-diphospho-1D-myo-inositol 1,2,3,4,6-pentakisphosphate + ADP. The enzyme catalyses 1-diphospho-1D-myo-inositol 2,3,4,5,6-pentakisphosphate + ATP + H(+) = 1,5-bis(diphospho)-1D-myo-inositol 2,3,4,6-tetrakisphosphate + ADP. In terms of biological role, converts inositol hexakisphosphate (InsP6) to diphosphoinositol pentakisphosphate (InsP7/PP-InsP5). Converts 1,3,4,5,6-pentakisphosphate (InsP5) to PP-InsP4. This Homo sapiens (Human) protein is Inositol hexakisphosphate kinase 3 (IP6K3).